Here is a 602-residue protein sequence, read N- to C-terminus: Sodium- and chloride-dependent GABA transporter 2 (602 aa).

The Cytoplasmic segment spans residues 1–40; it reads MDNRVSGTTSNGETKPVCPVMEKVEEDGTLEREQWTNKME. The next 3 membrane-spanning stretches (helical) occupy residues 41 to 61, 68 to 88, and 121 to 141; these read FVLS…FPYL, GAFF…VFFL, and IVSL…FYLF. Topologically, residues 142–206 are extracellular; the sequence is SSFTTDLPWG…GIQHLGSLRW (65 aa). C153 and C162 are disulfide-bonded. N169, N173, and N178 each carry an N-linked (GlcNAc...) asparagine glycan. 2 helical membrane-spanning segments follow: residues 207 to 227 and 233 to 253; these read ELVL…WKGV and VVYF…IRGV. Residue N269 is glycosylated (N-linked (GlcNAc...) asparagine). 7 helical membrane-spanning segments follow: residues 282–302, 319–339, 366–386, 418–438, 453–473, 490–510, and 528–548; these read AGTQ…ALGS, ILNS…LGFM, VVML…VVLL, ILIL…LTEG, GMCL…VYGA, PLIK…TFLF, and WWGD…IPAW. Over 549 to 602 the chain is Cytoplasmic; sequence SIYKLRTLKGPLRERLRQLVCPAEDLPQKSQPELTSPATPMTSLLRLTELESNC. Position 587 is a phosphothreonine (T587). S591 carries the post-translational modification Phosphoserine.

This sequence belongs to the sodium:neurotransmitter symporter (SNF) (TC 2.A.22) family. SLC6A13 subfamily. Brain, retina, and peripheral tissues. Expressed in hepatocytes (at protein level).

Its subcellular location is the cell membrane. The protein resides in the basolateral cell membrane. It catalyses the reaction 4-aminobutanoate(out) + chloride(out) + 2 Na(+)(out) = 4-aminobutanoate(in) + chloride(in) + 2 Na(+)(in). The enzyme catalyses taurine(out) + chloride(out) + 2 Na(+)(out) = taurine(in) + chloride(in) + 2 Na(+)(in). It carries out the reaction beta-alanine(out) + chloride(out) + 2 Na(+)(out) = beta-alanine(in) + chloride(in) + 2 Na(+)(in). The catalysed reaction is hypotaurine(out) + chloride(out) + 2 Na(+)(out) = hypotaurine(in) + chloride(in) + 2 Na(+)(in). With respect to regulation, GABA transport is inhibited by beta-alanine, L-2,4-Diaminobutyric acid, hypotaurine and nipecotic acid. Taurine transport is inhibited by hypotaurine, beta-alanine and nipecotic acid. Functionally, mediates sodium- and chloride-dependent transport of gamma-aminobutyric acid (GABA). Mediates transport of taurine and is the major taurine transporter in hepatocytes. Can also mediate transport of beta-alanine and hypotaurine. This is Sodium- and chloride-dependent GABA transporter 2 (Slc6a13) from Rattus norvegicus (Rat).